We begin with the raw amino-acid sequence, 264 residues long: Acetyl-coenzyme A carboxylase carboxyl transferase subunit beta (264 aa).

The CoA carboxyltransferase N-terminal domain maps to 4–264 (LWVKCKQCQQ…CGNSLEGVES (261 aa)). Residues cysteine 8, cysteine 11, cysteine 27, and cysteine 29 each contribute to the Zn(2+) site. The C4-type zinc finger occupies 8–29 (CKQCQQILLTKELEKNLKVCRC).

It belongs to the AccD/PCCB family. Acetyl-CoA carboxylase is a heterohexamer composed of biotin carboxyl carrier protein (AccB), biotin carboxylase (AccC) and two subunits each of ACCase subunit alpha (AccA) and ACCase subunit beta (AccD). Zn(2+) serves as cofactor.

It is found in the cytoplasm. The enzyme catalyses N(6)-carboxybiotinyl-L-lysyl-[protein] + acetyl-CoA = N(6)-biotinyl-L-lysyl-[protein] + malonyl-CoA. The protein operates within lipid metabolism; malonyl-CoA biosynthesis; malonyl-CoA from acetyl-CoA: step 1/1. In terms of biological role, component of the acetyl coenzyme A carboxylase (ACC) complex. Biotin carboxylase (BC) catalyzes the carboxylation of biotin on its carrier protein (BCCP) and then the CO(2) group is transferred by the transcarboxylase to acetyl-CoA to form malonyl-CoA. The polypeptide is Acetyl-coenzyme A carboxylase carboxyl transferase subunit beta (Heliobacterium modesticaldum (strain ATCC 51547 / Ice1)).